The primary structure comprises 418 residues: Imidazolonepropionase (418 aa).

His-79 and His-81 together coordinate Fe(3+). Residues His-79 and His-81 each contribute to the Zn(2+) site. Positions 88, 151, and 184 each coordinate 4-imidazolone-5-propanoate. Position 151 (Tyr-151) interacts with N-formimidoyl-L-glutamate. His-249 contacts Fe(3+). His-249 contributes to the Zn(2+) binding site. Gln-252 contacts 4-imidazolone-5-propanoate. Asp-324 is a binding site for Fe(3+). Asp-324 is a binding site for Zn(2+). Residues Asn-326 and Gly-328 each contribute to the N-formimidoyl-L-glutamate site. Thr-329 contacts 4-imidazolone-5-propanoate.

The protein belongs to the metallo-dependent hydrolases superfamily. HutI family. It depends on Zn(2+) as a cofactor. The cofactor is Fe(3+).

Its subcellular location is the cytoplasm. The catalysed reaction is 4-imidazolone-5-propanoate + H2O = N-formimidoyl-L-glutamate. It functions in the pathway amino-acid degradation; L-histidine degradation into L-glutamate; N-formimidoyl-L-glutamate from L-histidine: step 3/3. Its function is as follows. Catalyzes the hydrolytic cleavage of the carbon-nitrogen bond in imidazolone-5-propanoate to yield N-formimidoyl-L-glutamate. It is the third step in the universal histidine degradation pathway. The polypeptide is Imidazolonepropionase (Colwellia psychrerythraea (strain 34H / ATCC BAA-681) (Vibrio psychroerythus)).